The sequence spans 234 residues: Inosine triphosphate pyrophosphatase (234 aa).

11–16 (SGNKGK) is an ITP binding site. E40 is a binding site for Mg(2+). Residues K53, 81-82 (DT), K98, 176-179 (FGWD), K203, and 208-209 (HR) each bind ITP.

It belongs to the HAM1 NTPase family. As to quaternary structure, homodimer. It depends on Mg(2+) as a cofactor. Requires Mn(2+) as cofactor.

It localises to the cytoplasm. The catalysed reaction is ITP + H2O = IMP + diphosphate + H(+). It catalyses the reaction dITP + H2O = dIMP + diphosphate + H(+). The enzyme catalyses XTP + H2O = XMP + diphosphate + H(+). Pyrophosphatase that hydrolyzes non-canonical purine nucleotides such as inosine triphosphate (ITP), deoxyinosine triphosphate (dITP) or xanthosine 5'-triphosphate (XTP) to their respective monophosphate derivatives. The enzyme does not distinguish between the deoxy- and ribose forms. Probably excludes non-canonical purines from RNA and DNA precursor pools, thus preventing their incorporation into RNA and DNA and avoiding chromosomal lesions. This Leishmania major protein is Inosine triphosphate pyrophosphatase.